Consider the following 103-residue polypeptide: G0/G1 switch protein 2 (103 aa).

Residues 80–103 (LQEKGKQQDTVLGGRALSNRQHAS) are disordered.

Directly interacts with BCL2; this interaction prevents the formation of the anti-apoptotic BAX-BCL2 complex. As to expression, widely expressed with highest levels in peripheral blood, skeletal muscle and heart, followed by kidney and liver.

It is found in the mitochondrion. Functionally, promotes apoptosis by binding to BCL2, hence preventing the formation of protective BCL2-BAX heterodimers. The polypeptide is G0/G1 switch protein 2 (G0S2) (Homo sapiens (Human)).